We begin with the raw amino-acid sequence, 529 residues long: Structure-specific endonuclease subunit SLX1 homolog 1 (529 aa).

Residues arginine 4–glutamine 89 form the GIY-YIG domain. The SLX1-type zinc-finger motif lies at cysteine 231 to cysteine 364. 3 disordered regions span residues valine 275–histidine 305, asparagine 409–aspartate 437, and serine 470–aspartate 501. The span at arginine 282 to serine 297 shows a compositional bias: basic and acidic residues.

This sequence belongs to the SLX1 family. As to quaternary structure, forms a heterodimer with a member of the SLX4 family. A divalent metal cation serves as cofactor.

The protein localises to the nucleus. In terms of biological role, catalytic subunit of a heterodimeric structure-specific endonuclease that resolves DNA secondary structures generated during DNA repair and recombination. Has endonuclease activity towards branched DNA substrates, introducing single-strand cuts in duplex DNA close to junctions with ss-DNA. The chain is Structure-specific endonuclease subunit SLX1 homolog 1 from Trypanosoma cruzi (strain CL Brener).